A 727-amino-acid chain; its full sequence is Rho-related BTB domain-containing protein 2 (727 aa).

A rho-like region spans residues 1 to 210; sequence MDSDMDYERP…DNAIRAALIS (210 aa). GTP is bound by residues 21-28, 84-88, and 140-143; these read GDNAVGKT, DTFGD, and CQLD. BTB domains follow at residues 266-442 and 500-567; these read ADVI…DENE and SDVT…TSSP. The segment at 304–333 is disordered; that stretch reads ELGGPSEPGGTHPEDHQGHSDQHHHHHHHH. A compositionally biased stretch (basic and acidic residues) spans 315-324; sequence HPEDHQGHSD. A disordered region spans residues 703–727; the sequence is FWNSPSSPSSSAASSSSPSSSSAVV. The segment covering 706 to 727 has biased composition (low complexity); the sequence is SPSSPSSSAASSSSPSSSSAVV.

Belongs to the small GTPase superfamily. Rho family. Interacts with HSP90AA1 and HSP90AB1. Forms a complex with CUL3 and RBX1. Interacts (via BTB 1 domain) with CUL3. Interacts with MSI2. Post-translationally, autoubiquitinated by RHOBTB2-CUL3-RBX1 ubiquitin ligase complex. In terms of tissue distribution, ubiquitous, with highest levels in neural tissues. Expression is also detected in fetal lung, heart, and brain.

Its function is as follows. Regulator of cell proliferation and apoptosis. It likely functions as a substrate-adapter that recruits key substrates, e.g. MSI2, to CUL3-based ubiquitin ligase complexes for degradation. Required for MSI2 ubiquitination and degradation. The polypeptide is Rho-related BTB domain-containing protein 2 (RHOBTB2) (Homo sapiens (Human)).